Here is a 188-residue protein sequence, read N- to C-terminus: dCTP deaminase (188 aa).

Residues 111 to 116 (KSTYAR), 135 to 137 (TLE), glutamine 156, tyrosine 170, and glutamine 180 each bind dCTP. The Proton donor/acceptor role is filled by glutamate 137.

The protein belongs to the dCTP deaminase family. As to quaternary structure, homotrimer.

The catalysed reaction is dCTP + H2O + H(+) = dUTP + NH4(+). The protein operates within pyrimidine metabolism; dUMP biosynthesis; dUMP from dCTP (dUTP route): step 1/2. Catalyzes the deamination of dCTP to dUTP. The polypeptide is dCTP deaminase (Cupriavidus metallidurans (strain ATCC 43123 / DSM 2839 / NBRC 102507 / CH34) (Ralstonia metallidurans)).